The primary structure comprises 930 residues: Translation initiation factor IF-2 (930 aa).

The segment covering 50 to 67 has biased composition (low complexity); the sequence is FKPAAAPKVEAKPAAPKV. Disordered stretches follow at residues 50-195 and 260-346; these read FKPA…PRID and EVVP…HELP. 2 stretches are compositionally biased toward basic and acidic residues: residues 68 to 90 and 110 to 125; these read SAEK…EAKP and FKAE…AERR. Residues 129-141 are compositionally biased toward low complexity; sequence KGNNRDQQQNGNR. Basic and acidic residues-rich tracts occupy residues 157–167 and 262–295; these read RDNRRFNDQAK and VPEK…DGPR. Residues 309 to 318 show a composition bias toward low complexity; the sequence is NQKNSNWNNN. The span at 337–346 shows a compositional bias: basic and acidic residues; that stretch reads VTERKFHELP. Residues 432–599 enclose the tr-type G domain; sequence ERPPVVTIMG…TVLLVAEIQE (168 aa). The G1 stretch occupies residues 441 to 448; the sequence is GHVDHGKT. Position 441–448 (441–448) interacts with GTP; sequence GHVDHGKT. Residues 466–470 form a G2 region; it reads GITQH. Residues 487-490 are G3; the sequence is DTPG. Residues 487–491 and 541–544 each bind GTP; these read DTPGH and NKID. The interval 541–544 is G4; it reads NKID. The G5 stretch occupies residues 577–579; the sequence is SAK.

Belongs to the TRAFAC class translation factor GTPase superfamily. Classic translation factor GTPase family. IF-2 subfamily.

Its subcellular location is the cytoplasm. Functionally, one of the essential components for the initiation of protein synthesis. Protects formylmethionyl-tRNA from spontaneous hydrolysis and promotes its binding to the 30S ribosomal subunits. Also involved in the hydrolysis of GTP during the formation of the 70S ribosomal complex. The protein is Translation initiation factor IF-2 of Streptococcus pneumoniae (strain Hungary19A-6).